A 237-amino-acid polypeptide reads, in one-letter code: tRNA(His) guanylyltransferase (237 aa).

Residue alanine 2 is modified to N-acetylalanine. Aspartate 29 and glycine 30 together coordinate Mg(2+). The GTP site is built by lysine 32, phenylalanine 33, histidine 34, lysine 44, and aspartate 47. Aspartate 77 contacts Mg(2+).

It belongs to the tRNA(His) guanylyltransferase family. Homotetramer. Requires Mg(2+) as cofactor.

The catalysed reaction is a 5'-end ribonucleotide-tRNA(His) + GTP + ATP + H2O = a 5'-end phospho-guanosine-ribonucleotide-tRNA(His) + AMP + 2 diphosphate + H(+). The enzyme catalyses a 5'-end ribonucleotide-RNA + a ribonucleoside 5'-triphosphate + ATP + H2O = a 5'-end phospho-ribonucleoside-ribonucleotide-RNA + AMP + 2 diphosphate + H(+). Acts as a tRNA(His) guanylyltransferase that catalyzes 3'-5' addition of a single guanosine residue to the -1 position of tRNA(His), to form a non-Watson-Crick G(-1):A-73 base pair. After addition of G(-1), THG1 removes pyrophosphate from the tRNA 5'-end, generating 5'-monophosphorylated G(-1)-containing tRNA which is important for recognition of tRNA(His) by its cognate histidyl-tRNA synthetase. In addition to the single-G(-1) addition reaction, THG1 polymerizes multiple G residues to the 5'-end of tRNA(His) variants using the 3'-end of the tRNA(His) acceptor stem as a template. The chain is tRNA(His) guanylyltransferase from Saccharomyces cerevisiae (strain ATCC 204508 / S288c) (Baker's yeast).